A 394-amino-acid polypeptide reads, in one-letter code: Phosphopentomutase (394 aa).

Aspartate 14, aspartate 287, histidine 292, aspartate 328, histidine 329, and histidine 340 together coordinate Mn(2+).

Belongs to the phosphopentomutase family. The cofactor is Mn(2+).

Its subcellular location is the cytoplasm. The catalysed reaction is 2-deoxy-alpha-D-ribose 1-phosphate = 2-deoxy-D-ribose 5-phosphate. It carries out the reaction alpha-D-ribose 1-phosphate = D-ribose 5-phosphate. It functions in the pathway carbohydrate degradation; 2-deoxy-D-ribose 1-phosphate degradation; D-glyceraldehyde 3-phosphate and acetaldehyde from 2-deoxy-alpha-D-ribose 1-phosphate: step 1/2. Isomerase that catalyzes the conversion of deoxy-ribose 1-phosphate (dRib-1-P) and ribose 1-phosphate (Rib-1-P) to deoxy-ribose 5-phosphate (dRib-5-P) and ribose 5-phosphate (Rib-5-P), respectively. The chain is Phosphopentomutase from Listeria monocytogenes serotype 4b (strain CLIP80459).